The chain runs to 306 residues: Mitochondrial substrate carrier family protein M (306 aa).

Residues 1–10 are Mitochondrial intermembrane-facing; the sequence is MRYILNNNVE. Solcar repeat units lie at residues 5–98, 108–195, and 207–299; these read LNNN…YKNI, LNTF…IKFY, and LNAS…IKKS. A helical transmembrane segment spans residues 11–31; it reads GTSALLGSTVATAFLQPFDFL. At 32–72 the chain is on the mitochondrial matrix side; sequence KIRLQGSGFASGGDLNKFKRVGVIDTCKNVLKNEGIKQFWR. Residues 73–89 traverse the membrane as a helical segment; sequence GSSPTIVASGIAWGTYM. The Mitochondrial intermembrane portion of the chain corresponds to 90–113; that stretch reads HFYEAYKNILKSKYNVTQLNTFDH. Residues 114–134 form a helical membrane-spanning segment; the sequence is FICAVGASATQVFITNPIFLI. The Mitochondrial matrix segment spans residues 135 to 163; that stretch reads KTRMQLQTPGSANYYTGIFDGIKKTVKVE. A helical transmembrane segment spans residues 164 to 184; that stretch reads GFKGLYKGVIPSLWLTFHGGI. Topologically, residues 185 to 211 are mitochondrial intermembrane; the sequence is QMSSYEHIKFYFSSNSGKSLDSLNASE. A helical membrane pass occupies residues 212–232; sequence IFIASSISKFLASTILYPFQV. Over 233 to 278 the chain is Mitochondrial matrix; that stretch reads VKTRLQDERNIPNQNNVRVYNGTKDVIFKILKNEGIIGFYRGLVPN. Residues 279–296 form a helical membrane-spanning segment; that stretch reads TLKVIPNTSITLLLYEEI. The Mitochondrial intermembrane segment spans residues 297-306; the sequence is KKSFNYIINE.

The protein belongs to the mitochondrial carrier (TC 2.A.29) family.

The protein resides in the mitochondrion inner membrane. Functionally, mitochondrial solute carriers shuttle metabolites, nucleotides, and cofactors through the mitochondrial inner membrane. Transports folate across the inner membranes of mitochondria. The sequence is that of Mitochondrial substrate carrier family protein M (mcfM) from Dictyostelium discoideum (Social amoeba).